Reading from the N-terminus, the 232-residue chain is Putative N-acetylmannosamine-6-phosphate 2-epimerase (232 aa).

The protein belongs to the NanE family.

The enzyme catalyses an N-acyl-D-glucosamine 6-phosphate = an N-acyl-D-mannosamine 6-phosphate. The protein operates within amino-sugar metabolism; N-acetylneuraminate degradation; D-fructose 6-phosphate from N-acetylneuraminate: step 3/5. Functionally, converts N-acetylmannosamine-6-phosphate (ManNAc-6-P) to N-acetylglucosamine-6-phosphate (GlcNAc-6-P). This chain is Putative N-acetylmannosamine-6-phosphate 2-epimerase, found in Borreliella afzelii (strain PKo) (Borrelia afzelii).